The chain runs to 575 residues: Transmembrane protein 108 (575 aa).

The chain crosses the membrane as a helical span at residues 9-29 (YCQLLSFLLILALTEALAFAI). The interaction with SH3GL2 stretch occupies residues 31–169 (EPSPRESLQV…TTTRRPPRPP (139 aa)). A disordered region spans residues 65–398 (MLTPNPDGPP…PSRVSESTIS (334 aa)). The span at 74–87 (PSQAAAPMATPTPR) shows a compositional bias: low complexity. The segment covering 95 to 115 (HTISTIAATVTAPHSESSLST) has biased composition (polar residues). A compositionally biased stretch (low complexity) spans 146–160 (PPGATSRPTTAPPRT). The segment at 173–407 (RKGAGNSSRP…SGAKEETVAT (235 aa)) is interaction with DST (isoform 1). Polar residues predominate over residues 244–271 (YSSSPQPQTVAATTVPSNTSWAPTTTSL). The span at 290–318 (TFTSQGGTPDATAASGAPVSPQAAPVPSQ) shows a compositional bias: low complexity. Positions 329 to 352 (PSHSDSWLTVTPGTSRPLSTSSGV) are enriched in polar residues. Positions 353-366 (FTAATGPTPAAFDT) are enriched in low complexity. A compositionally biased stretch (polar residues) spans 367–398 (SVSAPSQGIPQGASTTPQAPTHPSRVSESTIS). Residues 469-489 (IAWVILAISVPISSCSVLLTV) traverse the membrane as a helical segment. The tract at residues 490–575 (CCMKRKKKTA…FVGNDQVSEI (86 aa)) is interaction with CYFIP2.

Interacts with DST (isoform 1). Interacts with SH3GL2. Interacts (via N-terminus) with CYFIP1 and CYFIP2; the interactions associate TMEM108 with the WAVE1 complex. Post-translationally, glycosylated.

It localises to the membrane. It is found in the postsynaptic density. Its subcellular location is the endosome membrane. The protein resides in the cell projection. The protein localises to the axon. It localises to the dendrite. It is found in the early endosome. Its function is as follows. Transmembrane protein required for proper cognitive functions. Involved in the development of dentate gyrus (DG) neuron circuitry, is necessary for AMPA receptors surface expression and proper excitatory postsynaptic currents of DG granule neurons. Regulates the organization and stability of the microtubule network of sensory neurons to allow axonal transport. Through the interaction with DST, mediates the docking of the dynein/dynactin motor complex to vesicle cargos for retrograde axonal transport. In hippocampal neurons, required for BDNF-dependent dendrite outgrowth. Cooperates with SH3GL2 and recruits the WAVE1 complex to facilitate actin-dependent BDNF:NTRK2 early endocytic trafficking and mediate signaling from early endosomes. This Homo sapiens (Human) protein is Transmembrane protein 108.